A 308-amino-acid polypeptide reads, in one-letter code: Methionyl-tRNA formyltransferase (308 aa).

A (6S)-5,6,7,8-tetrahydrofolate-binding site is contributed by Ser110–Pro113.

This sequence belongs to the Fmt family.

It carries out the reaction L-methionyl-tRNA(fMet) + (6R)-10-formyltetrahydrofolate = N-formyl-L-methionyl-tRNA(fMet) + (6S)-5,6,7,8-tetrahydrofolate + H(+). Attaches a formyl group to the free amino group of methionyl-tRNA(fMet). The formyl group appears to play a dual role in the initiator identity of N-formylmethionyl-tRNA by promoting its recognition by IF2 and preventing the misappropriation of this tRNA by the elongation apparatus. This chain is Methionyl-tRNA formyltransferase, found in Neisseria meningitidis serogroup C / serotype 2a (strain ATCC 700532 / DSM 15464 / FAM18).